Here is a 128-residue protein sequence, read N- to C-terminus: MRTALLLLAALAVATGPALTLRCHVCTSSSNCKHSVVCPASSRFCKTTNTVEPLRGNLVKKDCAESCTPSYTLQGQVSSGTSSTQCCQEDLCNEKLHNAAPTRTALAHSALSLGLALSLLAVILAPSL.

A signal peptide spans 1-20 (MRTALLLLAALAVATGPALT). Positions 21 to 108 (LRCHVCTSSS…AAPTRTALAH (88 aa)) constitute a UPAR/Ly6 domain. 5 cysteine pairs are disulfide-bonded: Cys-23–Cys-45, Cys-26–Cys-32, Cys-38–Cys-63, Cys-67–Cys-86, and Cys-87–Cys-92. Asn-98 carries GPI-anchor amidated asparagine lipidation. Residues 99–128 (AAPTRTALAHSALSLGLALSLLAVILAPSL) constitute a propeptide, removed in mature form.

In terms of tissue distribution, expressed exclusively at the outer cell surface of transitional epithelia and the keratinocyte of stratified squamous epithelia.

The protein resides in the cell membrane. May act as a specification marker at earliest stage specification of lymphocytes between B- and T-cell development. Marks the earliest stage of B-cell specification. The chain is Lymphocyte antigen 6D (LY6D) from Homo sapiens (Human).